Here is a 127-residue protein sequence, read N- to C-terminus: Fluoride-specific ion channel FluC 1 (127 aa).

Helical transmembrane passes span 6–26 (PLVT…GSNL), 29–49 (FVGL…CGSF), and 95–115 (EWAV…VLVG).

The protein belongs to the fluoride channel Fluc/FEX (TC 1.A.43) family.

Its subcellular location is the cell membrane. The enzyme catalyses fluoride(in) = fluoride(out). In terms of biological role, fluoride-specific ion channel. Important for reducing fluoride concentration in the cell, thus reducing its toxicity. The polypeptide is Fluoride-specific ion channel FluC 1 (Haloarcula marismortui (strain ATCC 43049 / DSM 3752 / JCM 8966 / VKM B-1809) (Halobacterium marismortui)).